Reading from the N-terminus, the 186-residue chain is Large ribosomal subunit protein uL5c (186 aa).

This sequence belongs to the universal ribosomal protein uL5 family. As to quaternary structure, part of the 50S ribosomal subunit; contacts the 5S rRNA.

The protein resides in the plastid. Its subcellular location is the chloroplast. Its function is as follows. Binds 5S rRNA, forms part of the central protuberance of the 50S subunit. In Pleurastrum terricola (Filamentous green alga), this protein is Large ribosomal subunit protein uL5c (rpl5).